Consider the following 276-residue polypeptide: Hydroxyethylthiazole kinase (276 aa).

Met48 lines the substrate pocket. 2 residues coordinate ATP: Arg124 and Thr175. Gly202 provides a ligand contact to substrate.

The protein belongs to the Thz kinase family. Mg(2+) is required as a cofactor.

The enzyme catalyses 5-(2-hydroxyethyl)-4-methylthiazole + ATP = 4-methyl-5-(2-phosphooxyethyl)-thiazole + ADP + H(+). Its pathway is cofactor biosynthesis; thiamine diphosphate biosynthesis; 4-methyl-5-(2-phosphoethyl)-thiazole from 5-(2-hydroxyethyl)-4-methylthiazole: step 1/1. Its function is as follows. Catalyzes the phosphorylation of the hydroxyl group of 4-methyl-5-beta-hydroxyethylthiazole (THZ). The protein is Hydroxyethylthiazole kinase of Clostridium beijerinckii (strain ATCC 51743 / NCIMB 8052) (Clostridium acetobutylicum).